A 319-amino-acid polypeptide reads, in one-letter code: Lipoyl synthase (319 aa).

[4Fe-4S] cluster contacts are provided by Cys66, Cys71, Cys77, Cys92, Cys96, Cys99, and Ser305. Positions 78-294 constitute a Radical SAM core domain; the sequence is FNRGTATFMI…KKEALSIGFT (217 aa).

It belongs to the radical SAM superfamily. Lipoyl synthase family. [4Fe-4S] cluster serves as cofactor.

Its subcellular location is the cytoplasm. The catalysed reaction is [[Fe-S] cluster scaffold protein carrying a second [4Fe-4S](2+) cluster] + N(6)-octanoyl-L-lysyl-[protein] + 2 oxidized [2Fe-2S]-[ferredoxin] + 2 S-adenosyl-L-methionine + 4 H(+) = [[Fe-S] cluster scaffold protein] + N(6)-[(R)-dihydrolipoyl]-L-lysyl-[protein] + 4 Fe(3+) + 2 hydrogen sulfide + 2 5'-deoxyadenosine + 2 L-methionine + 2 reduced [2Fe-2S]-[ferredoxin]. The protein operates within protein modification; protein lipoylation via endogenous pathway; protein N(6)-(lipoyl)lysine from octanoyl-[acyl-carrier-protein]: step 2/2. Its function is as follows. Catalyzes the radical-mediated insertion of two sulfur atoms into the C-6 and C-8 positions of the octanoyl moiety bound to the lipoyl domains of lipoate-dependent enzymes, thereby converting the octanoylated domains into lipoylated derivatives. This Buchnera aphidicola subsp. Schizaphis graminum (strain Sg) protein is Lipoyl synthase.